The primary structure comprises 618 residues: Putative UDP-glucuronate:xylan alpha-glucuronosyltransferase 3 (618 aa).

The helical; Signal-anchor for type II membrane protein transmembrane segment at 32-54 threads the bilayer; sequence GVKFNTLKLVLICIMLGALFTIY. 2 residues coordinate Mn(2+): Asp-379 and Asp-381. Substrate-binding positions include 379–381, 408–410, 435–439, and 489–495; these read DAD, NSG, NGGDQ, and HYLGYNK. A Mn(2+)-binding site is contributed by His-489. The segment covering 598-608 has biased composition (low complexity); that stretch reads TNNSSTTTTSS. Positions 598-618 are disordered; sequence TNNSSTTTTSSPPHKTALPSL.

Belongs to the glycosyltransferase 8 family. Glycogenin subfamily. Requires Mn(2+) as cofactor.

The protein resides in the golgi apparatus membrane. In terms of biological role, may be involved in the substitutions of the xylan backbone in stem glucuronoxylan. The sequence is that of Putative UDP-glucuronate:xylan alpha-glucuronosyltransferase 3 (GUX3) from Arabidopsis thaliana (Mouse-ear cress).